The sequence spans 838 residues: MGNGLWFVGVIILGAAWGQVHDWTEQTDPWFLDGLGMDRMYWRDTNTGRLWLPNTPDPQKPPRGFLAPPDELNLTTASLPLLRWYEERFCFVLVTTAEFPRDPGQLLYIPKTYLLGRPPNASLPAPTTVEPTAQPPPAVAPLKGLLHNPTASVLLRSRAWVTFSAVPDPEALTFPRGDNVATASHPSGPRDTPPPRPPVGARRHPTTELDITHLHNASTTWLATRGLLRSPGRYVYFSPSASTWPVGIWTTGELVLGCDAALVRARYGREFMGLVISMHDSPPAEVMVVPAGQTLDRVGDPADENPPGALPGPPGGPRYRVFVLGSLTRADNGSALDALRRVGGYPEEGTNYAQFLSRAYAEFFSGDAGAEQGPRPPLFWRLTGLLATSGFAFVNAAHANGAVCLSDLLGFLAHSRALAGLAARGAAGCAADSVFFNVSVLDPTARLQLEARLQHLVAEILEREQSLALHALGYQLAFVLDSPSAYDAVAPSAAHLIDALYAEFLGGRVLTTPVVHRALFYASAVLRQPFLAGVPSAVQRERARRSLLIASALCTSDVAAATNADLRTALARADHQKTLFWLPDHFSPCAASLRFDLDESVFILDALAQATRSETPVEVLAQQTHGLASTLTRWAHYNALIRAFVPEASHRCGGQSANVEPRILVPITHNASYVVTHSPLPRGIGYKLTGVDVRRPLFLTYLTATCEGSTRDIESKRLVRTQNQRDLGLVGAVFMRYTPAGEVMSVLLVDTDNTQQQIAAGPTEGAPSVFSSDVPSTALLLFPNGTVIHLLAFDTQPVAAIAPGFLAASALGVVMITAALAGILKVLRTSVPFFWRRE.

The signal sequence occupies residues 1-18 (MGNGLWFVGVIILGAAWG). At 19 to 803 (QVHDWTEQTD…DTQPVAAIAP (785 aa)) the chain is on the virion surface side. N73 and N120 each carry an N-linked (GlcNAc...) asparagine; by host glycan. The tract at residues 174 to 204 (FPRGDNVATASHPSGPRDTPPPRPPVGARRH) is disordered. The N-linked (GlcNAc...) asparagine; by host glycan is linked to N216. Residues 259-323 (DAALVRARYG…PGGPRYRVFV (65 aa)) form an interaction with gL region. 4 N-linked (GlcNAc...) asparagine; by host glycosylation sites follow: N332, N437, N670, and N784. The chain crosses the membrane as a helical span at residues 804–824 (GFLAASALGVVMITAALAGIL). At 825–838 (KVLRTSVPFFWRRE) the chain is on the intravirion side.

This sequence belongs to the herpesviridae glycoprotein H family. As to quaternary structure, interacts with glycoprotein L (gL); this interaction is necessary for the correct processing and cell surface expression of gH. The heterodimer gH/gL seems to interact with gB trimers during fusion. In terms of processing, N-glycosylated, O-glycosylated, and sialylated.

The protein resides in the virion membrane. The protein localises to the host cell membrane. It is found in the host endosome membrane. The heterodimer glycoprotein H-glycoprotein L is required for the fusion of viral and plasma membranes leading to virus entry into the host cell. Following initial binding to host receptor, membrane fusion is mediated by the fusion machinery composed of gB and the heterodimer gH/gL. May also be involved in the fusion between the virion envelope and the outer nuclear membrane during virion morphogenesis. In Homo sapiens (Human), this protein is Envelope glycoprotein H.